The primary structure comprises 209 residues: Orotate phosphoribosyltransferase (209 aa).

5-phospho-alpha-D-ribose 1-diphosphate is bound by residues Arg96, Lys100, His102, and Glu122 to Ser130. Ser126 is a binding site for orotate.

This sequence belongs to the purine/pyrimidine phosphoribosyltransferase family. PyrE subfamily. In terms of assembly, homodimer. Mg(2+) serves as cofactor.

It catalyses the reaction orotidine 5'-phosphate + diphosphate = orotate + 5-phospho-alpha-D-ribose 1-diphosphate. It functions in the pathway pyrimidine metabolism; UMP biosynthesis via de novo pathway; UMP from orotate: step 1/2. Functionally, catalyzes the transfer of a ribosyl phosphate group from 5-phosphoribose 1-diphosphate to orotate, leading to the formation of orotidine monophosphate (OMP). The protein is Orotate phosphoribosyltransferase of Streptococcus pyogenes serotype M3 (strain ATCC BAA-595 / MGAS315).